Here is a 446-residue protein sequence, read N- to C-terminus: Alpha-galacturonidase (446 aa).

Residue 10–72 (IKIAYIGGGS…GRWRYEAVST (63 aa)) coordinates NAD(+). Asn-151 contributes to the substrate binding site. Residue Cys-173 participates in Mn(2+) binding. Catalysis depends on His-174, which acts as the Proton donor. His-210 is a Mn(2+) binding site.

This sequence belongs to the glycosyl hydrolase 4 family. As to quaternary structure, homotetramer. The cofactor is NAD(+). It depends on Mn(2+) as a cofactor.

The catalysed reaction is [(1-&gt;4)-alpha-D-galacturonosyl](n) + H2O = alpha-D-galacturonate + [(1-&gt;4)-alpha-D-galacturonosyl](n-1). Its function is as follows. Alpha-galacturonidase able to catalyze the hydrolysis of the chromogenic substrate p-nitrophenyl-alpha-D-galacturonic acid (pNPalphaGalUA), and of the probable natural substrate alpha-1,4-di-galacturonate (GalUA(2)). Can neither hydrolyze pNPbetaGalUA, nor the stereoisomeric pNPalphaGlcUA. Does not display alpha- or beta-glucosidase activity as it fails to hydrolyze melibiose, raffinose, lactose and the chromogenic analogs, pNPalphaGal and pNPbetaGal. Cannot use the following compounds as substrates: pNP-N-acetyl-alpha- and beta-D-galactosaminide, pNP-N-acetyl-alpha- and beta-D-glucosaminide, pNP-alpha-L- and beta-L-arabinopyranoside, pNP-alpha- and beta-D-glucuronide, pNP-alpha- and beta-D-glucopyranoside, pNP-alpha- and beta-D-glucopyranoside 6-phosphate, pNP-alpha-D-galactopyranoside 6-phosphate and oNP-beta-D-galactopyranoside 6-phosphate. This Bacillus subtilis (strain 168) protein is Alpha-galacturonidase (lplD).